A 146-amino-acid chain; its full sequence is MGRFIFVSFGLLVVFLSLSGTGADCPPDWSSYEGNCYLVVKEKKTWAEAQKFCTEQRKECHLVSFHSAEEVDFVVSKTFPILSYDLVWIGLNNIWNDCMLEWSDGTKLTYKAWSGIPECIISKTSDNQWLSRACSRTQPFVCKFQA.

The N-terminal stretch at 1–23 (MGRFIFVSFGLLVVFLSLSGTGA) is a signal peptide. 3 disulfide bridges follow: C25–C36, C53–C142, and C119–C134. In terms of domain architecture, C-type lectin spans 32-143 (YEGNCYLVVK…CSRTQPFVCK (112 aa)).

This sequence belongs to the snaclec family. Heterodimer of subunits alpha and beta; disulfide-linked. In terms of tissue distribution, expressed by the venom gland.

The protein resides in the secreted. Functionally, is a potent glycoprotein Ibalpha (GP1BA) antagonist. Concentration-dependently inhibits botrocetin-, ristocetin- and low dose thrombin-induced platelet aggregation. Inhibits platelet adhesion only through inhibiting the vWF interaction with GP1BA, but has minimal effect on other platelet receptors, such as alpha-IIb/beta-3 (ITGA2B/ITGB3) or alpha-2/beta-1 (ITGA2/ITGB1). Causes an instant severe thrombocytopenia in rats and is not lethal to mice. The protein is Snaclec agkicetin-C subunit beta of Deinagkistrodon acutus (Hundred-pace snake).